A 209-amino-acid polypeptide reads, in one-letter code: Outer-membrane lipoprotein carrier protein (209 aa).

An N-terminal signal peptide occupies residues Met1–Ala24.

The protein belongs to the LolA family. Monomer.

Its subcellular location is the periplasm. In terms of biological role, participates in the translocation of lipoproteins from the inner membrane to the outer membrane. Only forms a complex with a lipoprotein if the residue after the N-terminal Cys is not an aspartate (The Asp acts as a targeting signal to indicate that the lipoprotein should stay in the inner membrane). In Bordetella avium (strain 197N), this protein is Outer-membrane lipoprotein carrier protein.